The sequence spans 270 residues: Phosphatidylglycerol--prolipoprotein diacylglyceryl transferase (270 aa).

4 helical membrane passes run 19 to 39, 53 to 73, 92 to 112, and 117 to 137; these read FPVY…LWLA, FVDL…AYYV, QGGL…IIYA, and ISFW…QAIG. Arg-138 is an a 1,2-diacyl-sn-glycero-3-phospho-(1'-sn-glycerol) binding site. A run of 3 helical transmembrane segments spans residues 178–198, 206–226, and 236–256; these read HPTF…LLLL, GELF…VEEL, and LRIA…FIIV.

The protein belongs to the Lgt family.

The protein localises to the cell membrane. It carries out the reaction L-cysteinyl-[prolipoprotein] + a 1,2-diacyl-sn-glycero-3-phospho-(1'-sn-glycerol) = an S-1,2-diacyl-sn-glyceryl-L-cysteinyl-[prolipoprotein] + sn-glycerol 1-phosphate + H(+). Its pathway is protein modification; lipoprotein biosynthesis (diacylglyceryl transfer). In terms of biological role, catalyzes the transfer of the diacylglyceryl group from phosphatidylglycerol to the sulfhydryl group of the N-terminal cysteine of a prolipoprotein, the first step in the formation of mature lipoproteins. The protein is Phosphatidylglycerol--prolipoprotein diacylglyceryl transferase of Bacillus cytotoxicus (strain DSM 22905 / CIP 110041 / 391-98 / NVH 391-98).